The sequence spans 601 residues: GPI mannosyltransferase 3 (601 aa).

The next 5 helical transmembrane spans lie at 66–86, 133–153, 176–196, 243–263, and 270–290; these read LIFQIGYTLVKYAAISCELIV, APKLIMAVLAAIGEFHVILLA, TVINFTLVATVSNFFNCFFIT, PTNAFIWLILGGYMILNLVLS, and FSLLIKVICASFISISTNLCI. Residue Asn309 is glycosylated (N-linked (GlcNAc...) asparagine). 4 helical membrane passes run 327–347, 360–380, 387–407, and 421–441; these read VFQSLPIVAGYSLPLLIHSFF, VNPFLQIKTVVLLNVILYSLI, FIYPLQPFFIILSVFDGIWLL, and FFSQVMWILPVVSMVASMLLS. The N-linked (GlcNAc...) asparagine glycan is linked to Asn521.

Belongs to the glycosyltransferase 22 family. PIGB subfamily.

The protein resides in the endoplasmic reticulum membrane. It participates in glycolipid biosynthesis; glycosylphosphatidylinositol-anchor biosynthesis. In terms of biological role, mannosyltransferase involved in glycosylphosphatidylinositol-anchor biosynthesis. Transfers the third mannose to Man2-GlcN-acyl-PI during GPI precursor assembly. This is GPI mannosyltransferase 3 (GPI10) from Kluyveromyces lactis (strain ATCC 8585 / CBS 2359 / DSM 70799 / NBRC 1267 / NRRL Y-1140 / WM37) (Yeast).